We begin with the raw amino-acid sequence, 154 residues long: Endoribonuclease YbeY (154 aa).

The Zn(2+) site is built by histidine 114, histidine 118, and histidine 124.

This sequence belongs to the endoribonuclease YbeY family. Zn(2+) is required as a cofactor.

The protein resides in the cytoplasm. Its function is as follows. Single strand-specific metallo-endoribonuclease involved in late-stage 70S ribosome quality control and in maturation of the 3' terminus of the 16S rRNA. This chain is Endoribonuclease YbeY, found in Haemophilus influenzae (strain PittEE).